The following is a 593-amino-acid chain: Bifunctional purine biosynthesis protein ATIC (593 aa).

The MGS-like domain occupies 1-147 (MAARQQLALL…KNHARVTVVC (147 aa)). The interval 1–199 (MAARQQLALL…ISDYFRKEYS (199 aa)) is IMP cyclohydrolase. IMP-binding positions include 13-15 (SEK), 35-38 (SGGT), 65-68 (RVKT), 102-103 (CN), and 126-127 (DI). The Proton donor/acceptor; for FAICAR cyclization activity role is filled by Lys-138. Residue Lys-200 is modified to N6-acetyllysine. The tract at residues 200–593 (KGVSQLPLRY…IHTNLRLFHH (394 aa)) is AICAR formyltransferase. 5-amino-1-(5-phospho-beta-D-ribosyl)imidazole-4-carboxamide is bound by residues 208–209 (RY), His-268, Gly-317, Asp-340, Asn-432, and Arg-452. His-268 functions as the Proton acceptor; for AICAR formyltransferase activity in the catalytic mechanism. Residue Ile-453 participates in (6R)-10-formyltetrahydrofolate binding. Phe-542 lines the 5-amino-1-(5-phospho-beta-D-ribosyl)imidazole-4-carboxamide pocket. (6R)-10-formyltetrahydrofolate contacts are provided by residues Asp-547 and 566–567 (SA). 5-amino-1-(5-phospho-beta-D-ribosyl)imidazole-4-carboxamide is bound at residue Arg-589.

The protein belongs to the PurH family. As to quaternary structure, homodimer. Associates with internalized INSR complexes on Golgi/endosomal membranes. Interacts with INSR; ATIC together with PRKAA2/AMPK2 and HACD3/PTPLAD1 is proposed to be part of a signaling network regulating INSR autophosphorylation and endocytosis.

It localises to the cytoplasm. The protein localises to the cytosol. The catalysed reaction is (6R)-10-formyltetrahydrofolate + 5-amino-1-(5-phospho-beta-D-ribosyl)imidazole-4-carboxamide = 5-formamido-1-(5-phospho-D-ribosyl)imidazole-4-carboxamide + (6S)-5,6,7,8-tetrahydrofolate. It catalyses the reaction 10-formyldihydrofolate + 5-amino-1-(5-phospho-beta-D-ribosyl)imidazole-4-carboxamide = 5-formamido-1-(5-phospho-D-ribosyl)imidazole-4-carboxamide + 7,8-dihydrofolate. The enzyme catalyses IMP + H2O = 5-formamido-1-(5-phospho-D-ribosyl)imidazole-4-carboxamide. Its pathway is purine metabolism; IMP biosynthesis via de novo pathway; 5-formamido-1-(5-phospho-D-ribosyl)imidazole-4-carboxamide from 5-amino-1-(5-phospho-D-ribosyl)imidazole-4-carboxamide (10-formyl THF route): step 1/1. It functions in the pathway purine metabolism; IMP biosynthesis via de novo pathway; IMP from 5-formamido-1-(5-phospho-D-ribosyl)imidazole-4-carboxamide: step 1/1. With respect to regulation, AMP and XMP inhibit AICAR formyltransferase activity. AICAR formyltransferase activity is competitively inhibited by 2-[5-hydroxy-3-methyl-1-(2-methyl-4-sulfo-phenyl)-1H-pyrazol-4-ylazo]-4-sulfo-benzoic acid (326203-A). FAICAR cyclization is competitively inhibited by 1,5-dihydroimidazo[4,5-c][1,2,6]thiadiazin-4(3H)-one-2,2-dioxide and the corresponding nucleoside and nucleoside monophosphate. Functionally, bifunctional enzyme that catalyzes the last two steps of purine biosynthesis. Acts as a transformylase that incorporates a formyl group to the AMP analog AICAR (5-amino-1-(5-phospho-beta-D-ribosyl)imidazole-4-carboxamide) to produce the intermediate formyl-AICAR (FAICAR). Can use both 10-formyldihydrofolate and 10-formyltetrahydrofolate as the formyl donor in this reaction. Also catalyzes the cyclization of FAICAR to inosine monophosphate (IMP). Promotes insulin receptor/INSR autophosphorylation and is involved in INSR internalization. The protein is Bifunctional purine biosynthesis protein ATIC (ATIC) of Gallus gallus (Chicken).